A 335-amino-acid polypeptide reads, in one-letter code: Erlin-2-A (335 aa).

Residues 1–2 (MS) are Cytoplasmic-facing. Residues 3 to 23 (HAGAIVGLGVALIAAALFSAI) traverse the membrane as a helical segment. Residues 24 to 335 (HKIEEGHVGV…GLDEAASAEE (312 aa)) lie on the Lumenal side of the membrane. N106 carries an N-linked (GlcNAc...) asparagine glycan.

This sequence belongs to the band 7/mec-2 family.

The protein localises to the endoplasmic reticulum membrane. In terms of biological role, mediates the endoplasmic reticulum-associated degradation (ERAD) of inositol 1,4,5-trisphosphate receptors (IP3Rs). Promotes sterol-accelerated ERAD of HMGCR. Involved in regulation of cellular cholesterol homeostasis by regulation the SREBP signaling pathway. This Xenopus laevis (African clawed frog) protein is Erlin-2-A (erlin2-a).